Here is a 1609-residue protein sequence, read N- to C-terminus: Factor-induced gene 2 protein (1609 aa).

The signal sequence occupies residues 1–22 (MNSFASLGLIYSVVNLLTRVEA). N29 carries an N-linked (GlcNAc...) asparagine glycan. Disordered regions lie at residues 129–165 (SSTLSSTAQPHRTSHSSSSFELPVTAPSSSSLPSSTS), 196–243 (SSEI…EPLS), and 266–312 (TIPT…NYDV). Residues 137 to 148 (QPHRTSHSSSSF) show a composition bias toward polar residues. Positions 150–165 (LPVTAPSSSSLPSSTS) are enriched in low complexity. Positions 196-212 (SSEISGSTSPKSLESFD) are enriched in polar residues. 2 stretches are compositionally biased toward low complexity: residues 213–243 (TTGTITSSYSPSPSSKNSNQTSLLSPLEPLS) and 274–285 (TSSLPPTLRSSS). Residue N231 is glycosylated (N-linked (GlcNAc...) asparagine). Polar residues predominate over residues 286–312 (MAPTSGSDSISHNFTSPPSKTSGNYDV). 9 N-linked (GlcNAc...) asparagine glycosylation sites follow: N298, N347, N386, N426, N495, N535, N661, N674, and N713. Residues 846 to 876 (ATSEATSTSTQVSATSATATASESSTTSQVS) are disordered. N-linked (GlcNAc...) asparagine glycosylation is found at N889, N907, and N1079. Positions 1231-1243 (CTQDVPTQSSSPA) are enriched in polar residues. Residues 1231-1259 (CTQDVPTQSSSPASTLAYSPSVSTSSSSS) are disordered. Residues 1244-1259 (STLAYSPSVSTSSSSS) show a composition bias toward low complexity. Residue N1400 is glycosylated (N-linked (GlcNAc...) asparagine). The GPI-anchor amidated glycine moiety is linked to residue G1588. Positions 1589 to 1609 (SASKFLCSKFFMIMVMVINFI) are cleaved as a propeptide — removed in mature form.

Post-translationally, N-glycosylated.

Its subcellular location is the secreted. It localises to the cell wall. The protein localises to the membrane. Functionally, required for efficient mating. Plays a role in maintenance of cell wall integrity during mating. Important for mating cell projection shape and conjugation bridge diameter. Plays a role in cell fusion and nuclear migration. The protein is Factor-induced gene 2 protein (FIG2) of Saccharomyces cerevisiae (strain ATCC 204508 / S288c) (Baker's yeast).